The primary structure comprises 1125 residues: Transient receptor potential cation channel subfamily A member 1 (1125 aa).

The Cytoplasmic portion of the chain corresponds to 1–721 (MKRSLRRVLR…KWCAYGFRAH (721 aa)). ANK repeat units follow at residues 63 to 94 (ENLC…ALNV), 98 to 127 (YGNT…NPNL), 131 to 161 (NMMA…NINL), 165 to 194 (NGNT…KLCK), 198 to 227 (WGDY…KTGY), 239 to 268 (KKAS…HIDM), 272 to 301 (AKCM…GSSD), 309 to 338 (NQET…DINS), and 342 to 371 (EGRS…KVDI). Disulfide bonds link C193-C666, C463-C666, C609-C622, C622-C666, and C634-C859. P395 bears the 4-hydroxyproline; transient mark. ANK repeat units lie at residues 413–442 (DGCT…SVHS), 446–475 (DKKS…DTRL), 482–511 (HGMT…LFLS), 514–543 (NGWT…KCTD), and 548–577 (EGNT…DILL). (E)-cinnamaldehyde contacts are provided by C415 and C422. A (E)-cinnamaldehyde-binding site is contributed by C622. C634 carries the cysteine sulfenic acid (-SOH); transient; in hyperoxia modification. (E)-cinnamaldehyde contacts are provided by C642, C666, and K712. Residues 722-742 (MMNLGSYCLGLIPMTLLVVKI) form a helical membrane-spanning segment. At 743–767 (QPGMAFNSTGIINETISTHEERINT) the chain is on the extracellular side. N-linked (GlcNAc...) asparagine glycans are attached at residues N749 and N755. A helical transmembrane segment spans residues 768–788 (LNSFPLKICMILVFLSSIFGY). Topologically, residues 789–806 (CKEVVQIFQQKRNYFLDY) are cytoplasmic. E791, Q794, N808, and E811 together coordinate Ca(2+). A helical membrane pass occupies residues 807–827 (NNALEWVIYTTSMIFVLPLFL). Topologically, residues 828–832 (DIPAY) are extracellular. A helical transmembrane segment spans residues 833–853 (MQWQCGAIAIFFYWMNFLLYL). The Cytoplasmic portion of the chain corresponds to 854 to 876 (QRFENCGIFIVMLEVIFKTLLRS). At C859 the chain carries Cysteine sulfenic acid (-SOH); transient; in hyperoxia. A helical membrane pass occupies residues 877 to 897 (TGVFIFLLLAFGLSFYVLLNF). The Extracellular segment spans residues 898-904 (QDAFSTP). Residues 905–925 (LLSLIQTFSMMLGDINYRDAF) constitute an intramembrane region (pore-forming). Residues 926–937 (LEPLFRNELAYP) are Extracellular-facing. Residues 938–959 (VLTFGQLIAFTMFVPIVLMNLL) traverse the membrane as a helical segment. Residues 960–1125 (IGLAVGDIAE…THCSISHPDI (166 aa)) lie on the Cytoplasmic side of the membrane. Residues 1044–1073 (MEILKQKYRLKDLTSLLEKQHELIKLIIQK) adopt a coiled-coil conformation. 1048–1054 (KQKYRLK) contacts a 1,2-diacyl-sn-glycero-3-phospho-(1D-myo-inositol).

Belongs to the transient receptor (TC 1.A.4) family. In terms of assembly, homotetramer. Interacts with TMEM100. Interacts with EGLN1. Interacts with the scorpion wasabi receptor toxin at the same site that electrophiles but in a non-covalent manner. In terms of processing, TRPA1 activation by electrophiles occurs though covalent modification of specific cysteine residues in the N-terminal cytoplasmic domain. Post-translationally, hydroxylation is required for TRPA1 activity inhibition in normoxia. In hypoxia, the decrease in oxygen concentration diminishes the activity of the hydroxylase EGLN1, thus relieving TRPA1 from inhibition and ultimately leading to channel activation. Oxidation of Cys-634 and Cys-859 in hyperoxia may override the hydroxylase EGLN1-mediated inhibition, causing TRPA1 activation. As to expression, specifically expressed in a subset of nociceptive neurons. Expressed in dorsal root ganglia.

It is found in the cell membrane. It catalyses the reaction Ca(2+)(in) = Ca(2+)(out). It carries out the reaction Mg(2+)(in) = Mg(2+)(out). The enzyme catalyses Na(+)(in) = Na(+)(out). The catalysed reaction is K(+)(in) = K(+)(out). It catalyses the reaction Zn(2+)(in) = Zn(2+)(out). Its activity is regulated as follows. Electrophilic ligands activate the channel by covalent modification of intracellular cysteines; Cys-622 plays a key role in covalent binding of electrophiles. Extracellular Ca(2+) both potentiates and inactivates TRPA1; a rapid potentiation follows by slow desensitization. Activated by increase in intracellular Ca(2+) concentration. Inhibited by ruthenium red, a potent blocker of TRPV channels and selectively by A-967079. Activated by benzyl isothiocyanate (BITC), iodoacetamide, sulfhydryl reactive agent MTSEA, N-methyl maleimide (NMM), N-ethylmaleimide (NEM), and 2-aminoethyldiphenylborinate (2-APB). Also activated by hyperoxia. Acivated by intracellular Zn(2+). TRPA1 activation may critically depend on the presence of small intracellular compounds such as polyphosphates. Functionally, ligand-activated Ca(2+)-permeable, nonselective cation channel. Involved in pain detection and possibly also in cold perception, oxygen concentration perception, cough, itch, and inner ear function. Has a relatively high Ca(2+) selectivity, with a preference for divalent over monovalent cations (Ca(2+) &gt; Ba(2+) &gt; Mg(2+) &gt; NH4(+) &gt; Li(+) &gt; K(+)), the influx of cation into the cytoplasm, leads to membrane depolarization. Has a central role in the pain response to endogenous inflammatory mediators, such as bradykinin and to a diverse array of irritants. Activated by a large variety of structurally unrelated electrophilic and non-electrophilic chemical compounds, such as allylthiocyanate (AITC) from mustard oil or wasabi, cinnamaldehyde, diallyl disulfide (DADS) from garlic, and acrolein, an environmental irritant. Electrophilic ligands activate TRPA1 by interacting with critical N-terminal Cys residues in a covalent manner. Non-electrophile agonists bind at distinct sites in the transmembrane domain to promote channel activation. Also acts as an ionotropic cannabinoid receptor by being activated by delta(9)-tetrahydrocannabinol (THC), the psychoactive component of marijuana. May be a component for the mechanosensitive transduction channel of hair cells in inner ear, thereby participating in the perception of sounds. This Rattus norvegicus (Rat) protein is Transient receptor potential cation channel subfamily A member 1.